The primary structure comprises 515 residues: Zinc-binding protein AdcA (515 aa).

The signal sequence occupies residues 1–28; sequence MKKKILLMMSLISVFFAWQLTQAKQVLA. His-66 contacts Zn(2+). The tract at residues 125–148 is disordered; it reads DHHHEDADKKHEHNKHSEEGHNHA. Residues 129–148 are his-rich loop; sequence EDADKKHEHNKHSEEGHNHA. The Zn(2+) site is built by His-152, His-216, and Glu-291.

It belongs to the bacterial solute-binding protein 9 family.

Its function is as follows. Part of the ATP-binding cassette (ABC) transport system AdcABC involved in zinc import. Binds zinc with high affinity and specificity and delivers it to the membrane permease for translocation into the cytoplasm. In Streptococcus pyogenes serotype M6 (strain ATCC BAA-946 / MGAS10394), this protein is Zinc-binding protein AdcA (adcA).